The chain runs to 246 residues: Exosome complex component Rrp41 (246 aa).

The protein belongs to the RNase PH family. Rrp41 subfamily. Component of the archaeal exosome complex. Forms a hexameric ring-like arrangement composed of 3 Rrp41-Rrp42 heterodimers. The hexameric ring associates with a trimer of Rrp4 and/or Csl4 subunits.

The protein localises to the cytoplasm. Its function is as follows. Catalytic component of the exosome, which is a complex involved in RNA degradation. Has 3'-&gt;5' exoribonuclease activity. Can also synthesize heteromeric RNA-tails. The sequence is that of Exosome complex component Rrp41 from Pyrobaculum calidifontis (strain DSM 21063 / JCM 11548 / VA1).